A 263-amino-acid chain; its full sequence is 2-keto-4-pentenoate hydratase 1 (263 aa).

This sequence belongs to the hydratase/decarboxylase family. MhpD subfamily. Requires a divalent metal cation as cofactor.

It catalyses the reaction (S)-4-hydroxy-2-oxopentanoate = (2Z)-2-hydroxypenta-2,4-dienoate + H2O. It functions in the pathway aromatic compound metabolism; 3-phenylpropanoate degradation. In terms of biological role, catalyzes the conversion of 2-hydroxypentadienoic acid (enolic form of 2-oxopent-4-enoate) to 4-hydroxy-2-ketopentanoic acid. The chain is 2-keto-4-pentenoate hydratase 1 from Dechloromonas aromatica (strain RCB).